Consider the following 1331-residue polypeptide: Beta-mannanase/endoglucanase A (1331 aa).

Positions 1-41 (MRLKTKIRKKWLSVLCTVVFLLNILFIANVTILPKVGAATS) are cleaved as a signal peptide. The catalytic (mannanase) stretch occupies residues 42–325 (NDGVVKIDTS…YKTNAIGTSS (284 aa)). Glu-162 functions as the Proton donor in the catalytic mechanism. The active-site Nucleophile is Glu-257. Disordered regions lie at residues 319-363 (NAIG…TPAT), 515-566 (PSGA…TPAT), and 717-780 (EPSG…PLPT). The segment covering 323 to 335 (TSSTPTPTSTVTP) has biased composition (low complexity). Positions 363-516 (TSGQIKVLYA…GVLVWGQEPS (154 aa)) constitute a CBM3 1 domain. Composition is skewed to pro residues over residues 521–541 (APAP…PTVT) and 551–561 (TPTPTPTPTPV). Residues 566-719 (TGGQIKVLYA…GVLVWGQEPS (154 aa)) enclose the CBM3 2 domain. Positions 721 to 735 (TTPSPTSTPTVTVTP) are enriched in low complexity. Composition is skewed to pro residues over residues 736–756 (TPTP…PTVT) and 766–780 (TPTP…PLPT). The catalytic (endoglucanase) stretch occupies residues 781-1331 (ISPSPSVVEI…RNLVFMRALV (551 aa)).

In the N-terminal section; belongs to the glycosyl hydrolase 5 (cellulase A) family. It in the C-terminal section; belongs to the glycosyl hydrolase 44 (cellulase J) family.

The enzyme catalyses Random hydrolysis of (1-&gt;4)-beta-D-mannosidic linkages in mannans, galactomannans and glucomannans.. The catalysed reaction is Endohydrolysis of (1-&gt;4)-beta-D-glucosidic linkages in cellulose, lichenin and cereal beta-D-glucans.. In terms of biological role, degradation of hemicelluloses, the second most abundant polysaccharides in nature. Contains two catalytic domains with mannanase and endoglucanase activities. This is Beta-mannanase/endoglucanase A (manA) from Caldicellulosiruptor saccharolyticus (Caldocellum saccharolyticum).